The chain runs to 90 residues: Cell division topological specificity factor (90 aa).

It belongs to the MinE family.

In terms of biological role, prevents the cell division inhibition by proteins MinC and MinD at internal division sites while permitting inhibition at polar sites. This ensures cell division at the proper site by restricting the formation of a division septum at the midpoint of the long axis of the cell. The sequence is that of Cell division topological specificity factor from Lachnoclostridium phytofermentans (strain ATCC 700394 / DSM 18823 / ISDg) (Clostridium phytofermentans).